The following is a 303-amino-acid chain: Di/tripeptide transport system permease protein DppC (303 aa).

Helical transmembrane passes span 33 to 53 (ALGGLLFMLLIVFCALFAPWV), 103 to 123 (LLIGLSSVVISLIPGILLGLL), 131 to 151 (AGPLIMRLMDIMLALPSLLLA), 152 to 172 (VAIVAILGPGLINTVIAIAIV), 202 to 222 (AGTLRLMFVCVLPNCMAPLIV), 225 to 245 (TLSFSSAILDAAALGFLGLGV), and 267 to 287 (WWVVSLPGLTILLSVLAINLM). One can recognise an ABC transmembrane type-1 domain in the interval 99 to 288 (ARLSLLIGLS…LSVLAINLMG (190 aa)).

The protein belongs to the binding-protein-dependent transport system permease family. OppBC subfamily. In terms of assembly, the complex is composed of two ATP-binding proteins (DppD and DppF), two transmembrane proteins (DppB and DppC) and a solute-binding protein (DppA1-A5). Five orthologous SBPs (DppA1-A5) are present in P.aeruginosa, which increases the substrate specificity of the DppBCDF transporter.

The protein localises to the cell inner membrane. In terms of biological role, part of the ABC transporter DppABCDF involved in the uptake of various di/tripeptides. Is also involved in the uptake of phaseolotoxin, a toxic tripeptide inhibiting the enzyme ornithine carbamoyltransferase. Responsible for the translocation of the substrate across the membrane. The chain is Di/tripeptide transport system permease protein DppC from Pseudomonas aeruginosa (strain UCBPP-PA14).